The following is a 62-amino-acid chain: Large ribosomal subunit protein bL33 (62 aa).

The protein belongs to the bacterial ribosomal protein bL33 family.

This is Large ribosomal subunit protein bL33 from Cyanothece sp. (strain PCC 7425 / ATCC 29141).